Here is a 183-residue protein sequence, read N- to C-terminus: MTTIVSVRRNNKVVIAGDGQVSLGNTVMKGNARKVRRLYNNKVLAGFAGGTADAFTLFERFESKLQMHQGHLTKAAVELAKDWRSDRALRKLEALLAVADETASLIITGNGDVVQPENDLIAIGSGGAYAQAAATALLENTDLDAREIAEKALNIAGDICVFTNHHHTVEELDSTTEPETPAA.

Threonine 2 is an active-site residue. Residues glycine 157, cysteine 160, and threonine 163 each coordinate Na(+).

This sequence belongs to the peptidase T1B family. HslV subfamily. In terms of assembly, a double ring-shaped homohexamer of HslV is capped on each side by a ring-shaped HslU homohexamer. The assembly of the HslU/HslV complex is dependent on binding of ATP.

Its subcellular location is the cytoplasm. The catalysed reaction is ATP-dependent cleavage of peptide bonds with broad specificity.. Its activity is regulated as follows. Allosterically activated by HslU binding. Protease subunit of a proteasome-like degradation complex believed to be a general protein degrading machinery. The sequence is that of ATP-dependent protease subunit HslV from Vibrio parahaemolyticus serotype O3:K6 (strain RIMD 2210633).